The primary structure comprises 84 residues: U-actitoxin-Avd8e (84 aa).

The first 22 residues, 1–22 (MASARTLVLLLIGAVLMCQVSA), serve as a signal peptide directing secretion. A propeptide spanning residues 23-41 (DSELLNEILAAHMEEDMPE) is cleaved from the precursor. One can recognise a ShKT domain in the interval 44 to 84 (CIDRYRSNICGSVIRPLDCTRRKSRMGRFARTNCKKLCGFC). 3 disulfide bridges follow: C44-C84, C53-C77, and C62-C81.

The protein belongs to the sea anemone 8 toxin family.

The protein resides in the secreted. Its subcellular location is the nematocyst. The sequence is that of U-actitoxin-Avd8e from Anemonia viridis (Snakelocks anemone).